We begin with the raw amino-acid sequence, 476 residues long: C-terminal-binding protein (476 aa).

Residues Ser100, 180-185 (VGLGRI), Asp204, 237-243 (CTLNEHN), 264-266 (TAR), and Asp290 contribute to the NAD(+) site. The active site involves Arg266. Residue Glu295 is part of the active site. His315 functions as the Proton donor in the catalytic mechanism. 315-318 (HAAF) serves as a coordination point for NAD(+). The tract at residues 445 to 476 (VSSQSPLSAPDPNNHLSSSIKTEVKAESTEAP) is disordered. The segment covering 466–476 (TEVKAESTEAP) has biased composition (basic and acidic residues).

The protein belongs to the D-isomer specific 2-hydroxyacid dehydrogenase family. Homodimer. Interacts with hairy (hry), knirps (kni), snail (sna), and Enhancer of split m-delta (HLHm-delta). Complex may be involved in transcriptional repression. Also interacts with adenovirus E1A protein.

It localises to the nucleus. Functionally, corepressor targeting diverse transcription regulators. Hairy-interacting protein required for embryonic segmentation and hairy-mediated transcriptional repression. In Drosophila melanogaster (Fruit fly), this protein is C-terminal-binding protein (CtBP).